A 363-amino-acid chain; its full sequence is UDP-N-acetylglucosamine--N-acetylmuramyl-(pentapeptide) pyrophosphoryl-undecaprenol N-acetylglucosamine transferase (363 aa).

Residues 12-14, R166, S196, and Q291 each bind UDP-N-acetyl-alpha-D-glucosamine; that span reads TAG.

It belongs to the glycosyltransferase 28 family. MurG subfamily.

The protein resides in the cell inner membrane. The enzyme catalyses di-trans,octa-cis-undecaprenyl diphospho-N-acetyl-alpha-D-muramoyl-L-alanyl-D-glutamyl-meso-2,6-diaminopimeloyl-D-alanyl-D-alanine + UDP-N-acetyl-alpha-D-glucosamine = di-trans,octa-cis-undecaprenyl diphospho-[N-acetyl-alpha-D-glucosaminyl-(1-&gt;4)]-N-acetyl-alpha-D-muramoyl-L-alanyl-D-glutamyl-meso-2,6-diaminopimeloyl-D-alanyl-D-alanine + UDP + H(+). Its pathway is cell wall biogenesis; peptidoglycan biosynthesis. Its function is as follows. Cell wall formation. Catalyzes the transfer of a GlcNAc subunit on undecaprenyl-pyrophosphoryl-MurNAc-pentapeptide (lipid intermediate I) to form undecaprenyl-pyrophosphoryl-MurNAc-(pentapeptide)GlcNAc (lipid intermediate II). The protein is UDP-N-acetylglucosamine--N-acetylmuramyl-(pentapeptide) pyrophosphoryl-undecaprenol N-acetylglucosamine transferase of Legionella pneumophila (strain Lens).